The chain runs to 342 residues: MSAPGGPLARLEARLTREWQRRGALAWALTPFACVFGLCAALRRTAYAQGWKQPVDVGVPVVVVGNVTVGGTGKTPTVIALVDALRAAGFTPGVVSRGYGANVKAPTAVTPASRAAAAGDEPLLIARRTGAPVWVCPDRVAAAQALRAAHPDVDVIVSDDGLQHYRLARTVELVVFDHRLGGNGFLLPAGPLREPLSRHRDATLVNDPYSGALPPWPDTYALALTPGAAWHLDQPALRRPLSQFAHERVLAAAGIGAPERFFATLRAAGLAPATRALPDHYAFADNPFVDDAVDAILITEKDAVKLGASWRDARLWVVPVEAALDPRLIALVVEKLRGRSPA.

An ATP-binding site is contributed by 68-75; that stretch reads TVGGTGKT.

This sequence belongs to the LpxK family.

The catalysed reaction is a lipid A disaccharide + ATP = a lipid IVA + ADP + H(+). The protein operates within glycolipid biosynthesis; lipid IV(A) biosynthesis; lipid IV(A) from (3R)-3-hydroxytetradecanoyl-[acyl-carrier-protein] and UDP-N-acetyl-alpha-D-glucosamine: step 6/6. Functionally, transfers the gamma-phosphate of ATP to the 4'-position of a tetraacyldisaccharide 1-phosphate intermediate (termed DS-1-P) to form tetraacyldisaccharide 1,4'-bis-phosphate (lipid IVA). This chain is Tetraacyldisaccharide 4'-kinase, found in Burkholderia cenocepacia (strain HI2424).